The following is a 386-amino-acid chain: Patatin group M-3 (386 aa).

Positions 1-23 (MATTKSFLILFFMILATTSSTCA) are cleaved as a signal peptide. The region spanning 32 to 229 (LSIDGGGIKG…TVGDPALLSL (198 aa)) is the PNPLA domain. Positions 36-41 (GGGIKG) match the GXGXXG motif. Positions 75–79 (GTSTG) match the GXSXG motif. Residue serine 77 is the Nucleophile of the active site. An N-linked (GlcNAc...) asparagine glycan is attached at asparagine 115. Aspartate 215 acts as the Proton acceptor in catalysis. Positions 215–217 (DGG) match the DGA/G motif. Residues 321-384 (ENALTGTTTE…DRKKLRANKA (64 aa)) are a coiled coil.

The protein belongs to the patatin family. Tuber.

The protein localises to the vacuole. Its function is as follows. Probable lipolytic acyl hydrolase (LAH), an activity which is thought to be involved in the response of tubers to pathogens. The sequence is that of Patatin group M-3 from Solanum tuberosum (Potato).